A 239-amino-acid polypeptide reads, in one-letter code: LRRN4 C-terminal-like protein (239 aa).

Residues 1–19 (MLGSLSLLWLAAMTTSLVS) form the signal peptide. Residues 20 to 194 (QPQILTLEDY…KFIMPPKPVT (175 aa)) lie on the Extracellular side of the membrane. The region spanning 82–179 (QPEPPRLGEV…EGPENWTGPS (98 aa)) is the Fibronectin type-III domain. N132 and N174 each carry an N-linked (GlcNAc...) asparagine glycan. A helical transmembrane segment spans residues 195–215 (LVYAAVGVGTALALLSCAALV). Residues 216-239 (WHFCLRERWGCPRRQGMAQASEAL) are Cytoplasmic-facing.

The protein localises to the membrane. This Mus musculus (Mouse) protein is LRRN4 C-terminal-like protein (Lrrn4cl).